Consider the following 734-residue polypeptide: MALRFPRFSQGLAQDPTTRRIWFGIATAHDFESHDDITEERLYQNIFASHFGQLAIIFLWTSGNLFHVAWQGNFESWVQDPLHVRPIAHAIWDPHFGQPAVEAFTRGGALGPVNIAYSGVYQWWYTIGLRTNEDLYTGALFLLFLSAISLIAGWLHLQPKWKPSVSWFKNAESRLNHHLSGLFGVSSLAWTGHLVHVAIPGSRGEYVRWNNFLDVLPYPQGLGPLFTGQWNLYAQNPDSSSHLFGTSQGAGTAILTLLGGFHPQTQSLWLTDIAHHHLAIAFLFLVAGHMYRTNFGIGHSMKDLLEAHTPPGGRLGRGHKGLYDTINNSIHFQLGLALASLGVITSLVAQHMYSLPAYAFIAQDFTTQAALYTHHQYIAGFIMTGAFAHGAIFFIRDYNPEQNEDNVLARMLDHKEAIKSHLSWVSLFLGFHTLGLYVHNDVMLAFGTPEKQILIEPIFAQWIQSAHGKTSYGFDVLLSSTNGPAFNAGRSIWLPGWLNAVNENSNSLFLTIGPGDFLVHHAIALGLHTTTLILVKGALDARGSKLMPDKKDFGYSFPCDGPGRGGTCDISAWDAFYLAVFWMLNTIGWVTFYWHWKHITLWQGNVSQFNESSTYLMGWLRDYLWLNSSQLINGYNPFGMNSLSVWAWMFLFGHLVWATGFMFLISWRGYWQELIETLAWAHERTPLANLIRWRDKPVALSIVQARLVGLAHFSVGYIFTYAAFLIASTSGKFG.

8 helical membrane passes run 46–69 (IFAS…FHVA), 135–158 (LYTG…LHLQ), 175–199 (LNHH…HVAI), 273–291 (IAHH…GHMY), 330–353 (IHFQ…QHMY), 369–395 (AALY…IFFI), 417–439 (AIKS…LYVH), and 517–535 (FLVH…LILV). Positions 559 and 568 each coordinate [4Fe-4S] cluster. The next 2 membrane-spanning stretches (helical) occupy residues 575–596 (AFYL…YWHW) and 643–665 (LSVW…MFLI). Residues His654, Met662, and Tyr670 each coordinate chlorophyll a. Position 671 (Trp671) interacts with phylloquinone. Residues 707–727 (LVGLAHFSVGYIFTYAAFLIA) form a helical membrane-spanning segment.

It belongs to the PsaA/PsaB family. As to quaternary structure, the PsaA/B heterodimer binds the P700 chlorophyll special pair and subsequent electron acceptors. PSI consists of a core antenna complex that captures photons, and an electron transfer chain that converts photonic excitation into a charge separation. The eukaryotic PSI reaction center is composed of at least 11 subunits. P700 is a chlorophyll a/chlorophyll a' dimer, A0 is one or more chlorophyll a, A1 is one or both phylloquinones and FX is a shared 4Fe-4S iron-sulfur center. is required as a cofactor.

It localises to the plastid. It is found in the chloroplast thylakoid membrane. The enzyme catalyses reduced [plastocyanin] + hnu + oxidized [2Fe-2S]-[ferredoxin] = oxidized [plastocyanin] + reduced [2Fe-2S]-[ferredoxin]. In terms of biological role, psaA and PsaB bind P700, the primary electron donor of photosystem I (PSI), as well as the electron acceptors A0, A1 and FX. PSI is a plastocyanin-ferredoxin oxidoreductase, converting photonic excitation into a charge separation, which transfers an electron from the donor P700 chlorophyll pair to the spectroscopically characterized acceptors A0, A1, FX, FA and FB in turn. Oxidized P700 is reduced on the lumenal side of the thylakoid membrane by plastocyanin. In Drimys granadensis, this protein is Photosystem I P700 chlorophyll a apoprotein A2.